Consider the following 390-residue polypeptide: GDSL esterase/lipase At1g28580 (390 aa).

A signal peptide spans 1–28 (MAYPGSPILMKLLVFIFLSTFVVTNVSS). The Nucleophile role is filled by S44. Residues N140 and N322 are each glycosylated (N-linked (GlcNAc...) asparagine). Active-site residues include D347 and H350.

This sequence belongs to the 'GDSL' lipolytic enzyme family.

It is found in the secreted. The chain is GDSL esterase/lipase At1g28580 from Arabidopsis thaliana (Mouse-ear cress).